A 382-amino-acid chain; its full sequence is Glutamyl-tRNA reductase (382 aa).

Residues 38–41 (TCNR), Ser85, 90–92 (ENQ), and Gln96 each bind substrate. Cys39 (nucleophile) is an active-site residue. 164–169 (GAGEIG) contributes to the NADP(+) binding site.

The protein belongs to the glutamyl-tRNA reductase family. Homodimer.

The enzyme catalyses (S)-4-amino-5-oxopentanoate + tRNA(Glu) + NADP(+) = L-glutamyl-tRNA(Glu) + NADPH + H(+). It participates in porphyrin-containing compound metabolism; protoporphyrin-IX biosynthesis; 5-aminolevulinate from L-glutamyl-tRNA(Glu): step 1/2. In terms of biological role, catalyzes the NADPH-dependent reduction of glutamyl-tRNA(Glu) to glutamate 1-semialdehyde (GSA). This Methanococcus maripaludis (strain DSM 14266 / JCM 13030 / NBRC 101832 / S2 / LL) protein is Glutamyl-tRNA reductase.